Reading from the N-terminus, the 1354-residue chain is Rho-associated protein kinase 1 (1354 aa).

Position 2 is an N-acetylserine (serine 2). The region spanning tyrosine 76–phenylalanine 338 is the Protein kinase domain. ATP-binding positions include isoleucine 82–valine 90 and lysine 105. The active-site Proton acceptor is aspartate 198. Residues aspartate 341–alanine 409 enclose the AGC-kinase C-terminal domain. The segment at phenylalanine 368 to arginine 727 is interaction with FHOD1. Positions lysine 422 to lysine 692 form a coiled coil. The REM-1 domain occupies serine 479 to threonine 556. Residues glutamate 707 to serine 946 are SHROOM3 binding. Residues threonine 949–phenylalanine 1015 enclose the RhoBD domain. The interval leucine 998 to methionine 1010 is RHOA binding. The stretch at asparagine 1011–serine 1102 forms a coiled coil. Residues serine 1105 and serine 1108 each carry the phosphoserine modification. The segment at asparagine 1115 to serine 1354 is auto-inhibitory. The PH domain occupies glutamate 1118–proline 1317. Residues glycine 1228–cysteine 1283 form a Phorbol-ester/DAG-type zinc finger. Serine 1328 carries the phosphoserine modification. The tract at residues serine 1333–serine 1354 is disordered.

Belongs to the protein kinase superfamily. AGC Ser/Thr protein kinase family. As to quaternary structure, homodimer. Interacts with RHOA (activated by GTP), RHOB, RHOC, GEM, MYLC2B, RHOE, PPP1R12A, LIMK1, LIMK2, TSG101, CHORDC1, DAPK3, PFN1 and JIP3. Interacts with FHOD1 in a Src-dependent manner. Interacts with PTEN. Interacts with ITGB1BP1 (via N-terminus and PTB domain). Interacts with SHROOM3. Mg(2+) is required as a cofactor. Autophosphorylated on serine and threonine residues. In terms of processing, cleaved by caspase-3 during apoptosis. This leads to constitutive activation of the kinase and membrane blebbing. Highly expressed in brain, heart, lung, liver, stomach, spleen, kidney, testis, muscle, embryo and placenta.

It is found in the cytoplasm. The protein resides in the cytoskeleton. Its subcellular location is the microtubule organizing center. The protein localises to the centrosome. It localises to the centriole. It is found in the golgi apparatus membrane. The protein resides in the cell projection. Its subcellular location is the bleb. The protein localises to the cell membrane. It localises to the lamellipodium. It is found in the ruffle. The enzyme catalyses L-seryl-[protein] + ATP = O-phospho-L-seryl-[protein] + ADP + H(+). It carries out the reaction L-threonyl-[protein] + ATP = O-phospho-L-threonyl-[protein] + ADP + H(+). With respect to regulation, activated by RHOA binding. Inhibited by Y-27632. Protein kinase which is a key regulator of the actin cytoskeleton and cell polarity. Involved in regulation of smooth muscle contraction, actin cytoskeleton organization, stress fiber and focal adhesion formation, neurite retraction, cell adhesion and motility via phosphorylation of DAPK3, GFAP, LIMK1, LIMK2, MYL9/MLC2, TPPP, PFN1 and PPP1R12A. Phosphorylates FHOD1 and acts synergistically with it to promote SRC-dependent non-apoptotic plasma membrane blebbing. Phosphorylates JIP3 and regulates the recruitment of JNK to JIP3 upon UVB-induced stress. Acts as a suppressor of inflammatory cell migration by regulating PTEN phosphorylation and stability. Acts as a negative regulator of VEGF-induced angiogenic endothelial cell activation. Required for centrosome positioning and centrosome-dependent exit from mitosis. Plays a role in terminal erythroid differentiation. Inhibits podocyte motility via regulation of actin cytoskeletal dynamics and phosphorylation of CFL1. Promotes keratinocyte terminal differentiation. Involved in osteoblast compaction through the fibronectin fibrillogenesis cell-mediated matrix assembly process, essential for osteoblast mineralization. May regulate closure of the eyelids and ventral body wall by inducing the assembly of actomyosin bundles. The chain is Rho-associated protein kinase 1 (Rock1) from Mus musculus (Mouse).